The chain runs to 248 residues: Cell division protein ZapD (248 aa).

Belongs to the ZapD family. Interacts with FtsZ.

It localises to the cytoplasm. Its function is as follows. Cell division factor that enhances FtsZ-ring assembly. Directly interacts with FtsZ and promotes bundling of FtsZ protofilaments, with a reduction in FtsZ GTPase activity. The sequence is that of Cell division protein ZapD from Aliivibrio salmonicida (strain LFI1238) (Vibrio salmonicida (strain LFI1238)).